Here is a 520-residue protein sequence, read N- to C-terminus: MSLRFHTLPTLPRAVKPGCRELLCLLVIAVMVSPSSSGLCPTACICATDIVSCTNKNLSKVPGNLFRLIKRLDLSYNRIGLLDADWIPVSFVKLSTLIVRHNNITSISTGSFSTTPNLKCLDLSSNRLKSVKSAMFQELKVLEVLLLYNNHISYLDPAAFGGLSHLQKLYLSGNFLTKFPMDLYVGRFKLADLTFLDVSYNQIASIPMHHINLVPGKQLRGIFLHGNPFVCDCSLYSLLTFWYRRHFNSVTDFKHDYTCRLWLDSRHSHQLLLLQDSFLNCSHSVINGSFHALGFIHEAQVGERAIVHCDGKTGNGNTDFIWVGPDNRLLEPDKDTGNFRVFYNGSLVIENPGFEDAGVYSCIAMNRQRLLNETVDIMINVSNFTINRSHHAHEAFNTAFTTLAACVVSIVLVLLYLYLTPCPCKCRDKRQKNALNQSNAHSSILSPGPTRDASAEDRKAGKRVVFLEPLKDPAVGQNGKVKLVPSKTVIAEGILKSSRAKSDSDSVNSVFSDTPFVAST.

Residues 1-37 (MSLRFHTLPTLPRAVKPGCRELLCLLVIAVMVSPSSS) form the signal peptide. The 30-residue stretch at 38 to 67 (GLCPTACICATDIVSCTNKNLSKVPGNLFR) folds into the LRRNT domain. The Extracellular portion of the chain corresponds to 38–398 (GLCPTACICA…SHHAHEAFNT (361 aa)). 2 disulfides stabilise this stretch: Cys-40–Cys-46 and Cys-44–Cys-53. N-linked (GlcNAc...) asparagine glycosylation is present at Asn-57. 6 LRR repeats span residues 68–89 (LIKR…WIPV), 93–114 (KLST…SFST), 117–138 (NLKC…MFQE), 141–162 (VLEV…AFGG), 165–186 (HLQK…LYVG), and 192–213 (DLTF…HINL). A glycan (N-linked (GlcNAc...) asparagine) is linked at Asn-103. An LRRCT domain is found at 227-283 (NPFVCDCSLYSLLTFWYRRHFNSVTDFKHDYTCRLWLDSRHSHQLLLLQDSFLNCSH). Disulfide bonds link Cys-231-Cys-259 and Cys-233-Cys-281. 7 N-linked (GlcNAc...) asparagine glycosylation sites follow: Asn-280, Asn-287, Asn-344, Asn-372, Asn-380, Asn-383, and Asn-387. An Ig-like C2-type domain is found at 288–378 (GSFHALGFIH…RLLNETVDIM (91 aa)). Cys-309 and Cys-362 form a disulfide bridge. The helical transmembrane segment at 399–419 (AFTTLAACVVSIVLVLLYLYL) threads the bilayer. The Cytoplasmic segment spans residues 420–520 (TPCPCKCRDK…FSDTPFVAST (101 aa)). Disordered regions lie at residues 437–458 (QSNA…AEDR) and 498–520 (SRAK…VAST).

It belongs to the immunoglobulin superfamily. AMIGO family. In terms of assembly, binds itself as well as AMIGO1 and AMIGO3. In terms of tissue distribution, highest levels in the lung. High levels in cerebellar granule neurons and Purkinje cells. Also in pyramidal cells between CA1 and CA3 regions of the hippocampus and granule cells of the dentate gyrus.

The protein localises to the cell membrane. It localises to the nucleus. Its function is as follows. Required for depolarization-dependent survival of cultured cerebellar granule neurons. May mediate homophilic as well as heterophilic cell-cell interaction with AMIGO1 or AMIGO3. May contribute to signal transduction through its intracellular domain. The polypeptide is Amphoterin-induced protein 2 (Rattus norvegicus (Rat)).